The following is a 641-amino-acid chain: RING finger containing E3 ubiquitin-protein ligase WSV403 (641 aa).

The RING-type; atypical zinc-finger motif lies at C329–F371.

It carries out the reaction S-ubiquitinyl-[E2 ubiquitin-conjugating enzyme]-L-cysteine + [acceptor protein]-L-lysine = [E2 ubiquitin-conjugating enzyme]-L-cysteine + N(6)-ubiquitinyl-[acceptor protein]-L-lysine.. It participates in protein modification; protein ubiquitination. In terms of biological role, probable E3 ubiquitin-protein ligase which accepts ubiquitin from an E2 ubiquitin-conjugating enzyme in the form of a thioester and then directly transfers the ubiquitin to targeted substrates. In White spot syndrome virus (isolate Shrimp/China/Tongan/1996) (WSSV), this protein is RING finger containing E3 ubiquitin-protein ligase WSV403.